Reading from the N-terminus, the 279-residue chain is Histone chaperone ASF1 (279 aa).

The segment at 1–143 is interaction with HIR1; that stretch reads MSIVSLLGIK…HIVRNILAEK (143 aa). Positions 1–155 are interaction with histone H3, histone H4, RAD53 and the RF-C complex; it reads MSIVSLLGIK…VTRFNIVWDN (155 aa). Residues 156-279 form a disordered region; it reads ENEGDLYPPE…TPKDAARSTN (124 aa). Over residues 168–244 the composition is skewed to acidic residues; sequence GVDDEEEEDD…DEEEGEEEVG (77 aa). The stretch at 192–243 forms a coiled coil; that stretch reads DDQEDGEGEAEEAAEEEEEEEEKTEDNETNLEEEEEDIENSDGDEEEGEEEV. Composition is skewed to basic and acidic residues over residues 245 to 254 and 269 to 279; these read SVDKNEDGND and STPKDAARSTN.

It belongs to the ASF1 family. Interacts with histone H3/H4 heterodimers via both histone H3 and histone H4. Binds with higher affinity to H3/H4 heterodimers where histone H3 has been pre-acetylated on 'Lys-14'. Interacts with RAD53 and this may impair interaction with histones and chromatin assembly; the interaction is reduced upon activation of DNA damage or replication checkpoints which in turn promotes histone binding and chromatin assembly. Interacts with the CAC2 subunit of chromatin assembly factor 1 (CAF-1). Interacts with the HIR1, HIR2, HIR3 and HPC2 subunits of the HIR complex. Interacts with the RFC1, RFC2, RFC3, RFC4 and RFC5 subunits of the replication factor C (RF-C/RFC) complex; which may recruit this protein to DNA. Interacts with the SAS2, SAS4 and SAS5 subunits of the SAS/SAS-I complex. Interacts with the BDF1, BDF2, SPT15, TAF1 and TAF7 subunits of the TFIID complex. Interacts with RTT109 and VPS75; the interaction with RTT109 is direct.

It localises to the nucleus. Functionally, histone chaperone that facilitates histone deposition and histone exchange and removal during nucleosome assembly and disassembly. Facilitates histone deposition through both replication-dependent and replication-independent chromatin assembly pathways. Cooperates with chromatin assembly factor 1 (CAF-1) to promote replication-dependent chromatin assembly and with the HIR complex to promote replication-independent chromatin assembly, which may occur during transcription and DNA repair. May be required for the maintenance of a subset of replication elongation factors, including DNA polymerase epsilon, the RFC complex and PCNA, at stalled replication forks. Also required for RTT109-dependent acetylation of histone H3 on 'Lys-9' and 'Lys-56'. Promotion of RTT109-mediated histone H3 'Lys-56' acetylation is dependent on interactions with histone H3 pre-acetylated on 'Lys-14'. This Saccharomyces cerevisiae (strain ATCC 204508 / S288c) (Baker's yeast) protein is Histone chaperone ASF1.